A 137-amino-acid chain; its full sequence is MTKSELVEKLAARFPQLLLRDADISVKTILDAMSDALADGHRIEIRGFGSFGLNRRPPRVGRNPKSGERVLVPEKRVPHFKAGKELRERVDRNLTPSSGGSGNGHLTGTPSGKGPQGAAPGSPAVLHEGGGLNLARS.

Over residues 75–92 (KRVPHFKAGKELRERVDR) the composition is skewed to basic and acidic residues. The interval 75–137 (KRVPHFKAGK…EGGGLNLARS (63 aa)) is disordered. Gly residues predominate over residues 128–137 (EGGGLNLARS).

The protein belongs to the bacterial histone-like protein family. In terms of assembly, heterodimer of an alpha and a beta chain.

Its function is as follows. This protein is one of the two subunits of integration host factor, a specific DNA-binding protein that functions in genetic recombination as well as in transcriptional and translational control. This Cupriavidus pinatubonensis (strain JMP 134 / LMG 1197) (Cupriavidus necator (strain JMP 134)) protein is Integration host factor subunit beta.